The primary structure comprises 465 residues: MFRQEQPLAEGSFAPMGSLQPDAGNASWNGTEAPGGGARATPYSLQVTLTLVCLAGLLMLLTVFGNVLVIIAVFTSRALKAPQNLFLVSLASADILVATLVIPFSLANEVMGYWYFGKAWCEIYLALDVLFCTSSIVHLCAISLDRYWSITQAIEYNLKRTPRRIKAIIITVWVISAVISFPPLISIEKKGGGGGPQPAEPRCEINDQKWYVISSCIGSFFAPCLIMILVYVRIYQIAKRRTRVPPSRRGPDAVAAPPGGTERRPNGLGPERSAGPGGAEAEPLPTQLNGAPGEPAPAGPRDTDALDLEESSSSDHAERPPGPRRPERGPRGKGKARASQVKPGDSLPRRGPGATGIGTPAAGPGEERVGAAKASRWRGRQNREKRFTFVLAVVIGVFVVCWFPFFFTYTLTAVGCSVPRTLFKFFFWFGYCNSSLNPVIYTIFNHDFRRAFKKILCRGDRKRIV.

At Met-1–Thr-48 the chain is on the extracellular side. N-linked (GlcNAc...) asparagine glycans are attached at residues Asn-25 and Asn-29. The helical transmembrane segment at Leu-49–Phe-74 threads the bilayer. Residues Thr-75 to Leu-85 are Cytoplasmic-facing. A helical membrane pass occupies residues Phe-86 to Met-111. The Extracellular segment spans residues Gly-112–Cys-121. Cys-121 and Cys-203 are disulfide-bonded. Residues Glu-122–Leu-144 form a helical membrane-spanning segment. Residues Asp-145–Lys-166 are Cytoplasmic-facing. The chain crosses the membrane as a helical span at residues Ala-167–Ile-187. Residues Glu-188–Lys-209 are Extracellular-facing. Residues Trp-210–Val-232 form a helical membrane-spanning segment. The Cytoplasmic portion of the chain corresponds to Arg-233–Phe-389. A disordered region spans residues Thr-242–Arg-368. Residues Ser-313–Pro-330 are compositionally biased toward basic and acidic residues. Ser-346 carries the phosphoserine modification. At Arg-368 the chain carries Omega-N-methylarginine. The helical transmembrane segment at Val-390–Thr-410 threads the bilayer. Residues Leu-411–Lys-424 lie on the Extracellular side of the membrane. Residues Phe-425–Phe-444 form a helical membrane-spanning segment. At Asn-445–Val-465 the chain is on the cytoplasmic side. The S-palmitoyl cysteine moiety is linked to residue Cys-457.

This sequence belongs to the G-protein coupled receptor 1 family. Adrenergic receptor subfamily. ADRA2A sub-subfamily.

It is found in the cell membrane. Its function is as follows. Alpha-2 adrenergic receptors mediate the catecholamine-induced inhibition of adenylate cyclase through the action of G proteins. The rank order of potency for agonists of this receptor is oxymetazoline &gt; clonidine &gt; epinephrine &gt; norepinephrine &gt; phenylephrine &gt; dopamine &gt; p-synephrine &gt; p-tyramine &gt; serotonin = p-octopamine. For antagonists, the rank order is yohimbine &gt; phentolamine = mianserine &gt; chlorpromazine = spiperone = prazosin &gt; propanolol &gt; alprenolol = pindolol. The sequence is that of Alpha-2A adrenergic receptor from Homo sapiens (Human).